The sequence spans 184 residues: Protein GrpE (184 aa).

Residues Met1–Glu10 are compositionally biased toward basic and acidic residues. The disordered stretch occupies residues Met1–Gln38.

This sequence belongs to the GrpE family. Homodimer.

It localises to the cytoplasm. Functionally, participates actively in the response to hyperosmotic and heat shock by preventing the aggregation of stress-denatured proteins, in association with DnaK and GrpE. It is the nucleotide exchange factor for DnaK and may function as a thermosensor. Unfolded proteins bind initially to DnaJ; upon interaction with the DnaJ-bound protein, DnaK hydrolyzes its bound ATP, resulting in the formation of a stable complex. GrpE releases ADP from DnaK; ATP binding to DnaK triggers the release of the substrate protein, thus completing the reaction cycle. Several rounds of ATP-dependent interactions between DnaJ, DnaK and GrpE are required for fully efficient folding. The chain is Protein GrpE from Sulfurovum sp. (strain NBC37-1).